Reading from the N-terminus, the 159-residue chain is S-ribosylhomocysteine lyase (159 aa).

3 residues coordinate Fe cation: histidine 53, histidine 57, and cysteine 124.

The protein belongs to the LuxS family. In terms of assembly, homodimer. Fe cation serves as cofactor.

The catalysed reaction is S-(5-deoxy-D-ribos-5-yl)-L-homocysteine = (S)-4,5-dihydroxypentane-2,3-dione + L-homocysteine. Its function is as follows. Involved in the synthesis of autoinducer 2 (AI-2) which is secreted by bacteria and is used to communicate both the cell density and the metabolic potential of the environment. The regulation of gene expression in response to changes in cell density is called quorum sensing. Catalyzes the transformation of S-ribosylhomocysteine (RHC) to homocysteine (HC) and 4,5-dihydroxy-2,3-pentadione (DPD). The chain is S-ribosylhomocysteine lyase from Porphyromonas gingivalis (strain ATCC 33277 / DSM 20709 / CIP 103683 / JCM 12257 / NCTC 11834 / 2561).